The primary structure comprises 239 residues: Ribitol-5-phosphate cytidylyltransferase (239 aa).

CTP is bound by residues 7 to 10 and 80 to 86; these read FAGG and GETGQMS.

The protein belongs to the IspD/TarI cytidylyltransferase family. TarI subfamily.

It carries out the reaction D-ribitol 5-phosphate + CTP + H(+) = CDP-L-ribitol + diphosphate. It functions in the pathway cell wall biogenesis; poly(ribitol phosphate) teichoic acid biosynthesis. In terms of biological role, catalyzes the transfer of the cytidylyl group of CTP to D-ribitol 5-phosphate. The chain is Ribitol-5-phosphate cytidylyltransferase from Streptococcus agalactiae serotype Ia (strain ATCC 27591 / A909 / CDC SS700).